Here is a 302-residue protein sequence, read N- to C-terminus: Recombination-associated protein RdgC (302 aa).

The protein belongs to the RdgC family.

It localises to the cytoplasm. The protein localises to the nucleoid. Functionally, may be involved in recombination. The polypeptide is Recombination-associated protein RdgC (Xanthomonas campestris pv. campestris (strain 8004)).